The following is a 750-amino-acid chain: Neprilysin (750 aa).

Polar residues predominate over residues 1 to 14 (MGKSESQMDITDIN). Residues 1–20 (MGKSESQMDITDINTPKPKK) form a disordered region. G2 carries N-myristoyl glycine lipidation. The Cytoplasmic segment spans residues 2 to 28 (GKSESQMDITDINTPKPKKKQRWTPLE). 2 positions are modified to phosphoserine: S4 and S6. The short motif at 16 to 23 (PKPKKKQR) is the Stop-transfer sequence element. Residues 29–51 (ISLSVLVLLLTIIAVTMIALYAT) traverse the membrane as a helical; Signal-anchor for type II membrane protein segment. Residues 52-750 (YDDGICKSSD…MNPEKKCRVW (699 aa)) lie on the Extracellular side of the membrane. Positions 56–750 (ICKSSDCIKS…MNPEKKCRVW (695 aa)) constitute a Peptidase M13 domain. Disulfide bonds link C57–C62, C80–C735, C88–C695, C143–C411, C234–C242, and C621–C747. A peptide is bound at residue R103. An N-linked (GlcNAc...) asparagine glycan is attached at N145. Residues N285, N311, N325, and N335 are each glycosylated (N-linked (GlcNAc...) asparagine). Residue H584 participates in Zn(2+) binding. E585 is an active-site residue. H588 is a binding site for Zn(2+). The N-linked (GlcNAc...) asparagine glycan is linked to N628. Zn(2+) is bound at residue E647. The Proton donor role is filled by D651.

The protein belongs to the peptidase M13 family. Requires Zn(2+) as cofactor. In terms of processing, myristoylation is a determinant of membrane targeting. Post-translationally, glycosylation at Asn-628 is necessary both for surface expression and neutral endopeptidase activity.

Its subcellular location is the cell membrane. The catalysed reaction is Preferential cleavage of polypeptides between hydrophobic residues, particularly with Phe or Tyr at P1'.. It carries out the reaction substance P + H2O = substance P(1-9) + L-Leu-L-Met-NH2. It catalyses the reaction substance P + H2O = substance P(1-7) + L-Phe-Gly-L-Leu-L-Met-NH2. The enzyme catalyses neurotensin + H2O = neurotensin(1-11) + L-isoleucyl-L-leucine. The catalysed reaction is neurotensin + H2O = neurotensin(1-10) + L-tyrosyl-L-isoleucyl-L-leucine. Its function is as follows. Thermolysin-like specificity, but is almost confined on acting on polypeptides of up to 30 amino acids. Biologically important in the destruction of opioid peptides such as Met- and Leu-enkephalins by cleavage of a Gly-Phe bond. Catalyzes cleavage of bradykinin, substance P and neurotensin peptides. Able to cleave angiotensin-1, angiotensin-2 and angiotensin 1-9. Involved in the degradation of atrial natriuretic factor (ANF) and brain natriuretic factor (BNP(1-32)). Displays UV-inducible elastase activity toward skin preelastic and elastic fibers. The chain is Neprilysin (MME) from Pongo abelii (Sumatran orangutan).